Consider the following 250-residue polypeptide: MSNPESAKKQVDPPGYNELFMVRDTRNVDLERGLELCKPEKVNKQNLFTNIIKPQKDKINIKTDKIKFFLNNLFTEFSKFHDSCYPDGRISTRSKLRWPLLIIWCILIVFAIDKNFEVKDFLSIWINESFINENRFYSEIWGPIAIYICLFILLLLGLICMFPLHLCRVCVLALRETGMIIAVLGAALGMIIAALGATITGLLYFSHWALYKVVILALDLKIEPFKDEIAFLTLPTHNGETLSIRDNNQS.

Helical transmembrane passes span 98-118, 144-164, and 179-199; these read WPLL…NFEV, IAIY…MFPL, and MIIA…GATI.

Belongs to the UPF0494 family.

It localises to the cytoplasm. The protein localises to the endoplasmic reticulum. The protein resides in the golgi apparatus. It is found in the membrane. The sequence is that of UPF0494 membrane protein PB2B2.07c from Schizosaccharomyces pombe (strain 972 / ATCC 24843) (Fission yeast).